The following is a 494-amino-acid chain: Cysteine--tRNA ligase (494 aa).

Residue Cys-29 coordinates Zn(2+). The 'HIGH' region motif lies at 31 to 41 (VTVYDYCHLGH). Cys-216, His-241, and Glu-245 together coordinate Zn(2+). The 'KMSKS' region motif lies at 273–277 (KMSKS). Lys-276 serves as a coordination point for ATP.

The protein belongs to the class-I aminoacyl-tRNA synthetase family. In terms of assembly, monomer. It depends on Zn(2+) as a cofactor.

It localises to the cytoplasm. The enzyme catalyses tRNA(Cys) + L-cysteine + ATP = L-cysteinyl-tRNA(Cys) + AMP + diphosphate. In Cyanothece sp. (strain PCC 7425 / ATCC 29141), this protein is Cysteine--tRNA ligase.